Reading from the N-terminus, the 327-residue chain is Ankyrin repeat domain-containing protein SOWAHD (327 aa).

The disordered stretch occupies residues 1–31; the sequence is MAQALEDGNPLPKASNRPAESEAPSDPQIKD. ANK repeat units lie at residues 112–141, 147–162, and 186–216; these read CLEP…AEPS, DPIT…AKHG, and PGSG…LGAD. Residues 251–311 are disordered; the sequence is ERDRKRENAN…EKKASSTQEG (61 aa). Over residues 260-275 the composition is skewed to low complexity; the sequence is NNNSSRTTTTTTTTSR. Basic and acidic residues predominate over residues 292 to 305; it reads HYKEASQPVKEKKA.

This sequence belongs to the SOWAH family.

The polypeptide is Ankyrin repeat domain-containing protein SOWAHD (Sowahd) (Mus musculus (Mouse)).